Reading from the N-terminus, the 659-residue chain is tRNA uridine 5-carboxymethylaminomethyl modification enzyme MnmG (659 aa).

FAD is bound at residue glycine 13–glycine 18. Glycine 281–phenylalanine 295 serves as a coordination point for NAD(+).

This sequence belongs to the MnmG family. Homodimer. Heterotetramer of two MnmE and two MnmG subunits. The cofactor is FAD.

Its subcellular location is the cytoplasm. In terms of biological role, NAD-binding protein involved in the addition of a carboxymethylaminomethyl (cmnm) group at the wobble position (U34) of certain tRNAs, forming tRNA-cmnm(5)s(2)U34. This Delftia acidovorans (strain DSM 14801 / SPH-1) protein is tRNA uridine 5-carboxymethylaminomethyl modification enzyme MnmG.